Reading from the N-terminus, the 238-residue chain is Ubiquinone/menaquinone biosynthesis C-methyltransferase UbiE (238 aa).

The S-adenosyl-L-methionine site is built by Thr62 and Asp82.

It belongs to the class I-like SAM-binding methyltransferase superfamily. MenG/UbiE family.

The catalysed reaction is a 2-demethylmenaquinol + S-adenosyl-L-methionine = a menaquinol + S-adenosyl-L-homocysteine + H(+). It catalyses the reaction a 2-methoxy-6-(all-trans-polyprenyl)benzene-1,4-diol + S-adenosyl-L-methionine = a 5-methoxy-2-methyl-3-(all-trans-polyprenyl)benzene-1,4-diol + S-adenosyl-L-homocysteine + H(+). The protein operates within quinol/quinone metabolism; menaquinone biosynthesis; menaquinol from 1,4-dihydroxy-2-naphthoate: step 2/2. It participates in cofactor biosynthesis; ubiquinone biosynthesis. In terms of biological role, methyltransferase required for the conversion of demethylmenaquinol (DMKH2) to menaquinol (MKH2) and the conversion of 2-polyprenyl-6-methoxy-1,4-benzoquinol (DDMQH2) to 2-polyprenyl-3-methyl-6-methoxy-1,4-benzoquinol (DMQH2). The protein is Ubiquinone/menaquinone biosynthesis C-methyltransferase UbiE of Wolbachia pipientis wMel.